A 466-amino-acid chain; its full sequence is cGMP-specific 3',5'-cGMP phosphodiesterase 3 (466 aa).

Positions 1–120 (MAPQQNIMKQ…NSNNNNSNNN (120 aa)) are enriched in low complexity. Residues 1 to 150 (MAPQQNIMKQ…NNNKIRGYND (150 aa)) are disordered. Residues 123 to 134 (DDEEEEGDDEDN) are compositionally biased toward acidic residues. Low complexity predominate over residues 135-150 (NNNNNSNNNKIRGYND). The region spanning 137–458 (NNNSNNNKIR…EIWSNNGSSS (322 aa)) is the PDEase domain. H213 functions as the Proton donor in the catalytic mechanism. 4 residues coordinate a divalent metal cation: H217, H253, D254, and D364.

It belongs to the cyclic nucleotide phosphodiesterase family. It depends on a divalent metal cation as a cofactor.

It is found in the cytoplasm. Its subcellular location is the cytosol. The catalysed reaction is 3',5'-cyclic GMP + H2O = GMP + H(+). With respect to regulation, inhibited by 3-isobutyl-1-methylxanthine (IBMX). In terms of biological role, phosphodiesterase specific for cGMP, which is not activated by cGMP. Involved in the degradation of intracellular cGMP. In Dictyostelium discoideum (Social amoeba), this protein is cGMP-specific 3',5'-cGMP phosphodiesterase 3 (pde3).